A 242-amino-acid polypeptide reads, in one-letter code: METSVNFDPSNMPQHVAIIMDGNGRWAKKQGKLRVFGHQNGVNAVRAAVHFAAKYGIKVLTLYAFSSENWNRPATEVSALMSLFIQALNTEVSKLHKHNIRLNILGDKTRFSDSLQKRIIESETLTAHNTRLTLNIAANYGSHWDITEATKKLAEKVKLGKISVTDITPEKVQRALVTAEQPPVDLLIRTSGEQRISNFLLWQIAYAELFFSDVLWPDFDETSFSEAIYAYQQRERRFGGCE.

Residue Asp21 is part of the active site. A Mg(2+)-binding site is contributed by Asp21. Substrate-binding positions include 22 to 25, Trp26, Arg34, His38, and 66 to 68; these read GNGR and SSE. The active-site Proton acceptor is the Asn69. Residues Trp70, Arg72, Arg189, and 195-197 contribute to the substrate site; that span reads RIS. Glu208 is a Mg(2+) binding site.

It belongs to the UPP synthase family. As to quaternary structure, homodimer. It depends on Mg(2+) as a cofactor.

The catalysed reaction is 8 isopentenyl diphosphate + (2E,6E)-farnesyl diphosphate = di-trans,octa-cis-undecaprenyl diphosphate + 8 diphosphate. Functionally, catalyzes the sequential condensation of isopentenyl diphosphate (IPP) with (2E,6E)-farnesyl diphosphate (E,E-FPP) to yield (2Z,6Z,10Z,14Z,18Z,22Z,26Z,30Z,34E,38E)-undecaprenyl diphosphate (di-trans,octa-cis-UPP). UPP is the precursor of glycosyl carrier lipid in the biosynthesis of bacterial cell wall polysaccharide components such as peptidoglycan and lipopolysaccharide. The sequence is that of Ditrans,polycis-undecaprenyl-diphosphate synthase ((2E,6E)-farnesyl-diphosphate specific) from Haemophilus ducreyi (strain 35000HP / ATCC 700724).